Reading from the N-terminus, the 203-residue chain is GTP-binding protein YPTM2 (203 aa).

GTP contacts are provided by residues 15–23 (GDSGVGKSC), 33–40 (YLDSYIST), 63–67 (DTAGQ), 121–124 (NKSD), and 151–153 (SAK). The Effector region motif lies at 37–45 (YISTIGVDF). S-geranylgeranyl cysteine attachment occurs at residues Cys200 and Cys201.

It belongs to the small GTPase superfamily. Rab family. Its expression is weak in stems, higher in roots, leaves and coleoptiles, but highest in flowers.

It is found in the cell membrane. Protein transport. Probably involved in vesicular traffic. This is GTP-binding protein YPTM2 (YPTM2) from Zea mays (Maize).